The primary structure comprises 101 residues: uncharacterized protein (101 aa).

Residues 65-79 (QEAAAPAGPQEPAEA) show a composition bias toward low complexity. A disordered region spans residues 65 to 101 (QEAAAPAGPQEPAEASGDAGKKEEVEEEEIEIDFGMF). A compositionally biased stretch (acidic residues) spans 89-101 (VEEEEIEIDFGMF).

This is an uncharacterized protein from Encephalitozoon cuniculi (strain GB-M1) (Microsporidian parasite).